A 288-amino-acid polypeptide reads, in one-letter code: MESIRLKARAKINLGLDVIGRRENGYHDVRMVMQTVGLYDRIIMTRIPEEEIRIKTNIGFLPVNENNLVYKAIMLMKNKYKLDGGIEVDLNKFIPVAAGMAGGSSDAACALFGMNRLFELNVPMRELMKLGVEIGADVPYCLMRGTALAEGIGEKLTRLPDMPFCHILIAKPPVNVSTKLVYEKLDNTDVKLHPDIDGIIEAIKLKDVALVASRMGNVLESVTIPLYPVIDSIKKDMIEHGAINAMMSGSGPTVFGIFPDEQSMIACQQFLRQKGEARQVYTTETFTP.

Lysine 11 is an active-site residue. 95 to 105 lines the ATP pocket; it reads PVAAGMAGGSS. Residue aspartate 137 is part of the active site.

The protein belongs to the GHMP kinase family. IspE subfamily.

It catalyses the reaction 4-CDP-2-C-methyl-D-erythritol + ATP = 4-CDP-2-C-methyl-D-erythritol 2-phosphate + ADP + H(+). Its pathway is isoprenoid biosynthesis; isopentenyl diphosphate biosynthesis via DXP pathway; isopentenyl diphosphate from 1-deoxy-D-xylulose 5-phosphate: step 3/6. Functionally, catalyzes the phosphorylation of the position 2 hydroxy group of 4-diphosphocytidyl-2C-methyl-D-erythritol. The protein is 4-diphosphocytidyl-2-C-methyl-D-erythritol kinase of Lachnospira eligens (strain ATCC 27750 / DSM 3376 / VPI C15-48 / C15-B4) (Eubacterium eligens).